The primary structure comprises 144 residues: Large ribosomal subunit protein uL13 (144 aa).

It belongs to the universal ribosomal protein uL13 family. As to quaternary structure, part of the 50S ribosomal subunit.

Its function is as follows. This protein is one of the early assembly proteins of the 50S ribosomal subunit, although it is not seen to bind rRNA by itself. It is important during the early stages of 50S assembly. This is Large ribosomal subunit protein uL13 from Clostridium perfringens (strain ATCC 13124 / DSM 756 / JCM 1290 / NCIMB 6125 / NCTC 8237 / Type A).